A 318-amino-acid chain; its full sequence is UDP-3-O-acylglucosamine N-acyltransferase (318 aa).

Histidine 230 acts as the Proton acceptor in catalysis.

This sequence belongs to the transferase hexapeptide repeat family. LpxD subfamily. In terms of assembly, homotrimer.

It catalyses the reaction a UDP-3-O-[(3R)-3-hydroxyacyl]-alpha-D-glucosamine + a (3R)-hydroxyacyl-[ACP] = a UDP-2-N,3-O-bis[(3R)-3-hydroxyacyl]-alpha-D-glucosamine + holo-[ACP] + H(+). It functions in the pathway bacterial outer membrane biogenesis; LPS lipid A biosynthesis. In terms of biological role, catalyzes the N-acylation of UDP-3-O-acylglucosamine using 3-hydroxyacyl-ACP as the acyl donor. Is involved in the biosynthesis of lipid A, a phosphorylated glycolipid that anchors the lipopolysaccharide to the outer membrane of the cell. The polypeptide is UDP-3-O-acylglucosamine N-acyltransferase (Wolinella succinogenes (strain ATCC 29543 / DSM 1740 / CCUG 13145 / JCM 31913 / LMG 7466 / NCTC 11488 / FDC 602W) (Vibrio succinogenes)).